A 402-amino-acid chain; its full sequence is MKRFISAWNRTSLIKRIAIGVVIGAILGLLIPKITVIGLLGDMFVGGLKAIAPLLVSALVANALSQTREGQQSNMKTIIVLYLFGTFAAALTAVISHYIFPISLKLGAASATKAAAPQGVGEVFKDLMLKMVDNPINALSQANYIGVLVWSVVFGFAMRTASEHTKELLHTLAEVTSQIVRWIINLAPFGILGLVFDTISKNGVGVLADYGVLILVLVGTMTFVALVINPIIAFVMMGKNPFPLVFRCLKDSGITAFFTRSSAANIPVNLQLCEDLGLNPDTYSVSIPLGSTINMAGAAVTINVLTLAAVTTLGIEVDFATAFILSVVSTISACGASGIAGGSLLLVPVACSLFGISNDLAMQVVGVGFIVGVIQDSCETALNSSTDVLFTAVAEKSRWKKS.

The next 8 helical transmembrane spans lie at 17–37 (IAIGVVIGAILGLLIPKITVI), 44–64 (FVGGLKAIAPLLVSALVANAL), 78–98 (IIVLYLFGTFAAALTAVISHY), 138–158 (ALSQANYIGVLVWSVVFGFAM), 179–199 (IVRWIINLAPFGILGLVFDTI), 212–232 (VLILVLVGTMTFVALVINPII), 295–315 (MAGAAVTINVLTLAAVTTLGI), and 336–356 (ASGIAGGSLLLVPVACSLFGI).

This sequence belongs to the dicarboxylate/amino acid:cation symporter (DAACS) (TC 2.A.23) family.

The protein localises to the cell membrane. The catalysed reaction is L-serine(in) + Na(+)(in) = L-serine(out) + Na(+)(out). It carries out the reaction L-threonine(in) + Na(+)(in) = L-threonine(out) + Na(+)(out). Its function is as follows. Involved in the import of serine and threonine into the cell, with the concomitant import of sodium (symport system). This is Serine/threonine transporter SstT from Streptococcus thermophilus (strain ATCC BAA-250 / LMG 18311).